A 277-amino-acid chain; its full sequence is tRNA uridine(34) hydroxylase (277 aa).

The Rhodanese domain occupies 126 to 221; it reads SSPDVHVIDT…YLETVRGDDS (96 aa). Cys181 acts as the Cysteine persulfide intermediate in catalysis.

It belongs to the TrhO family.

The enzyme catalyses uridine(34) in tRNA + AH2 + O2 = 5-hydroxyuridine(34) in tRNA + A + H2O. Its function is as follows. Catalyzes oxygen-dependent 5-hydroxyuridine (ho5U) modification at position 34 in tRNAs. This is tRNA uridine(34) hydroxylase from Anaplasma marginale (strain Florida).